A 103-amino-acid polypeptide reads, in one-letter code: Small ribosomal subunit protein uS10 (103 aa).

It belongs to the universal ribosomal protein uS10 family. Part of the 30S ribosomal subunit.

Its function is as follows. Involved in the binding of tRNA to the ribosomes. This chain is Small ribosomal subunit protein uS10, found in Pseudomonas savastanoi pv. phaseolicola (strain 1448A / Race 6) (Pseudomonas syringae pv. phaseolicola (strain 1448A / Race 6)).